Reading from the N-terminus, the 492-residue chain is Probable malate:quinone oxidoreductase 1 (492 aa).

Belongs to the MQO family. Requires FAD as cofactor.

The enzyme catalyses (S)-malate + a quinone = a quinol + oxaloacetate. The protein operates within carbohydrate metabolism; tricarboxylic acid cycle; oxaloacetate from (S)-malate (quinone route): step 1/1. This is Probable malate:quinone oxidoreductase 1 from Staphylococcus epidermidis (strain ATCC 12228 / FDA PCI 1200).